A 287-amino-acid polypeptide reads, in one-letter code: Pyridoxal kinase PdxY (287 aa).

Substrate is bound by residues Ser-10 and 45 to 46 (TQ). Residues Asp-112, Ala-144, Glu-149, Lys-182, and 209–212 (RPLV) each bind ATP. Residue Asp-224 participates in substrate binding.

This sequence belongs to the pyridoxine kinase family. PdxY subfamily. Homodimer. Mg(2+) serves as cofactor.

It catalyses the reaction pyridoxal + ATP = pyridoxal 5'-phosphate + ADP + H(+). It functions in the pathway cofactor metabolism; pyridoxal 5'-phosphate salvage; pyridoxal 5'-phosphate from pyridoxal: step 1/1. Functionally, pyridoxal kinase involved in the salvage pathway of pyridoxal 5'-phosphate (PLP). Catalyzes the phosphorylation of pyridoxal to PLP. The chain is Pyridoxal kinase PdxY from Shigella sonnei (strain Ss046).